A 260-amino-acid polypeptide reads, in one-letter code: Small ribosomal subunit protein bS6 (260 aa).

Belongs to the bacterial ribosomal protein bS6 family.

Its function is as follows. Binds together with bS18 to 16S ribosomal RNA. This is Small ribosomal subunit protein bS6 from Wolbachia sp. subsp. Brugia malayi (strain TRS).